Reading from the N-terminus, the 270-residue chain is Regulatory protein RecX (270 aa).

It belongs to the RecX family.

The protein resides in the cytoplasm. Modulates RecA activity. This Bacillus cytotoxicus (strain DSM 22905 / CIP 110041 / 391-98 / NVH 391-98) protein is Regulatory protein RecX.